The following is an 84-amino-acid chain: U7-ctenitoxin-Pn1a (84 aa).

Positions methionine 1–alanine 17 are cleaved as a signal peptide. The propeptide occupies glutamate 18–alanine 38. Intrachain disulfides connect cysteine 41/cysteine 56, cysteine 48/cysteine 61, cysteine 55/cysteine 78, and cysteine 63/cysteine 76.

As to expression, expressed by the venom gland.

It is found in the secreted. Its function is as follows. Antagonist of L-type calcium channels (Cav1/CACNA1). Causes paralysis in the posterior limbs and gradual decreases in movement and aggression during 24 hours at dose levels of 5 ug per mouse. This chain is U7-ctenitoxin-Pn1a, found in Phoneutria nigriventer (Brazilian armed spider).